Reading from the N-terminus, the 388-residue chain is Granulocyte-macrophage colony-stimulating factor receptor subunit alpha (388 aa).

The first 29 residues, M1–A29, serve as a signal peptide directing secretion. Residues L30 to P327 lie on the Extracellular side of the membrane. N-linked (GlcNAc...) asparagine glycosylation is found at N43, N63, N106, N132, N165, and N237. Positions P228–T324 constitute a Fibronectin type-III domain. The short motif at W310–S314 is the WSXWS motif element. A helical membrane pass occupies residues G328–V348. Over T349–P388 the chain is Cytoplasmic. Residues L359 to R367 carry the Box 1 motif motif.

Belongs to the type I cytokine receptor family. Type 5 subfamily. In terms of assembly, heterodimer of an alpha and a beta subunit. The beta subunit is common to the IL3, IL5 and GM-CSF receptors. The signaling GM-CSF receptor complex is a dodecamer of two head-to-head hexamers of two alpha, two beta, and two ligand subunits.

It localises to the membrane. In terms of biological role, low affinity receptor for granulocyte-macrophage colony-stimulating factor. Transduces a signal that results in the proliferation, differentiation, and functional activation of hematopoietic cells. This chain is Granulocyte-macrophage colony-stimulating factor receptor subunit alpha (Csf2ra), found in Mus musculus (Mouse).